The sequence spans 332 residues: Succinylglutamate desuccinylase (332 aa).

3 residues coordinate Zn(2+): H59, E62, and H151. E215 is a catalytic residue.

The protein belongs to the AspA/AstE family. Succinylglutamate desuccinylase subfamily. It depends on Zn(2+) as a cofactor.

The enzyme catalyses N-succinyl-L-glutamate + H2O = L-glutamate + succinate. It functions in the pathway amino-acid degradation; L-arginine degradation via AST pathway; L-glutamate and succinate from L-arginine: step 5/5. Functionally, transforms N(2)-succinylglutamate into succinate and glutamate. This is Succinylglutamate desuccinylase from Pseudomonas aeruginosa (strain UCBPP-PA14).